Reading from the N-terminus, the 1007-residue chain is Serine/threonine-protein kinase PRP4 homolog (1007 aa).

Residues 1–10 show a composition bias toward polar residues; sequence MAAAETQSLR. Residues 1–99 are disordered; that stretch reads MAAAETQSLR…EGMSPAKRTK (99 aa). An N-acetylalanine modification is found at A2. A phosphoserine mark is found at S8, S20, S23, and S32. Composition is skewed to basic residues over residues 39–59 and 67–81; these read KHSRHKKKKHKHRSKHKKHKH and KKHKHKHKHKKHKRK. Basic and acidic residues predominate over residues 82 to 91; the sequence is EVIDASDKEG. Residues S87 and S93 each carry the phosphoserine modification. Residue K99 is modified to N6-acetyllysine; alternate. Residue K99 forms a Glycyl lysine isopeptide (Lys-Gly) (interchain with G-Cter in SUMO2); alternate linkage. K111 is covalently cross-linked (Glycyl lysine isopeptide (Lys-Gly) (interchain with G-Cter in SUMO2)). K117 participates in a covalent cross-link: Glycyl lysine isopeptide (Lys-Gly) (interchain with G-Cter in SUMO2); alternate. A Glycyl lysine isopeptide (Lys-Gly) (interchain with G-Cter in SUMO1); alternate cross-link involves residue K117. A Phosphoserine modification is found at S131. The residue at position 140 (Y140) is a Phosphotyrosine. Disordered regions lie at residues 140–533 and 559–583; these read YESG…EEED and SNMSVPSEPSSPQSSTRTRSPSPDD. 3 positions are modified to phosphoserine: S142, S144, and S166. A compositionally biased stretch (low complexity) spans 157–168; sequence GNRSSTRSSSTK. Glycyl lysine isopeptide (Lys-Gly) (interchain with G-Cter in SUMO2) cross-links involve residues K170 and K177. Composition is skewed to basic residues over residues 179–202 and 214–230; these read TTKKRSKSRSKERTRHRSDKKKSK and RSKSKERKKSKSPSKRS. Phosphoserine is present on residues S239, S241, S257, S277, S283, S292, and S294. A compositionally biased stretch (basic and acidic residues) spans 247 to 270; it reads RSQEKIGKARSPTDDKVKIEDKSK. The segment covering 302–315 has biased composition (basic residues); it reads SKDRRSRSKERKSK. Basic and acidic residues predominate over residues 316-325; sequence RSETDKEKKP. A phosphoserine mark is found at S328, S354, S356, S366, and S368. The span at 342–367 shows a compositional bias: basic residues; it reads PSRRPGRSPKRRSLSPKPRDKSRRSR. T385 carries the post-translational modification Phosphothreonine. Residue S387 is modified to Phosphoserine. Basic and acidic residues-rich tracts occupy residues 395–408 and 415–429; these read RSLERKRREPERRR and RPRDDILSRRERSKD. S427, S431, and S437 each carry phosphoserine. Residues 438–497 show a composition bias toward basic residues; sequence PTRRRSRSPIRRRSRSPLRRSRSPRRRSRSPRRRDRGRRSRSRLRRRSRSRGGRRRRSRS. A phosphoserine mark is found at S518, S519, S520, S565, S569, S578, and S580. Over residues 518–533 the composition is skewed to acidic residues; sequence SSSDDNLEDFDVEEED. The segment covering 562 to 581 has biased composition (low complexity); the sequence is SVPSEPSSPQSSTRTRSPSP. Residues K593 and K659 each participate in a glycyl lysine isopeptide (Lys-Gly) (interchain with G-Cter in SUMO2) cross-link. The 317-residue stretch at 687-1003 folds into the Protein kinase domain; the sequence is YNVYGYTGQG…INQALQHAFI (317 aa). ATP-binding positions include 693–701 and K717; that span reads TGQGVFSNV. K717 is modified (N6-acetyllysine). D815 serves as the catalytic Proton acceptor. Y849 carries the post-translational modification Phosphotyrosine. S852 is subject to Phosphoserine.

The protein belongs to the protein kinase superfamily. CMGC Ser/Thr protein kinase family. Interacts with CLK1 C-terminus. Associates with the U5 snRNP and NCOR1 deacetylase complexes. Identified in the spliceosome C complex. Post-translationally, phosphorylated by CLK1. Autophosphorylated; phosphorylation inhibits interaction with its targets, such as PRPF6 or SMARCA4.

It localises to the nucleus. It is found in the chromosome. The protein localises to the centromere. The protein resides in the kinetochore. It carries out the reaction L-seryl-[protein] + ATP = O-phospho-L-seryl-[protein] + ADP + H(+). It catalyses the reaction L-threonyl-[protein] + ATP = O-phospho-L-threonyl-[protein] + ADP + H(+). Its function is as follows. Serine/threonine kinase involved in spliceosomal assembly as well as mitosis and signaling regulation. Connects chromatin mediated regulation of transcription and pre-mRNA splicing. During spliceosomal assembly, interacts with and phosphorylates PRPF6 and PRPF31, components of the U4/U6-U5 tri-small nuclear ribonucleoprotein (snRNP), to facilitate the formation of the spliceosome B complex. Plays a role in regulating transcription and the spindle assembly checkpoint (SAC). Associates with U5 snRNP and NCOR1 deacetylase complexes which may allow a coordination of pre-mRNA splicing with chromatin remodeling events involved in transcriptional regulation. Associates and probably phosphorylates SMARCA4 and NCOR1. Phosphorylates SRSF1. Associates with kinetochores during mitosis and is necessary for recruitment and maintenance of the checkpoint proteins such as MAD1L1 and MAD12L1 at the kinetochores. Phosphorylates and regulates the activity of the transcription factors such as ELK1 and KLF13. Phosphorylates nuclear YAP1 and WWTR1/TAZ which induces nuclear exclusion and regulates Hippo signaling pathway, involved in tissue growth control. The sequence is that of Serine/threonine-protein kinase PRP4 homolog (PRP4K) from Pongo abelii (Sumatran orangutan).